We begin with the raw amino-acid sequence, 68 residues long: Conotoxin Cal12.1p1 (68 aa).

Residues 1–23 (DLITNSYTRGKPRHVTSWRNLRT) constitute a propeptide that is removed on maturation.

In terms of processing, contains 4 disulfide bonds. Expressed by the venom duct.

It localises to the secreted. This chain is Conotoxin Cal12.1p1, found in Californiconus californicus (California cone).